Consider the following 192-residue polypeptide: UPF0316 protein SSP0880 (192 aa).

The next 3 helical transmembrane spans lie at 8 to 28 (PWLM…CLTM), 40 to 60 (VAAI…GMVM), and 66 to 86 (IQNV…GMKI).

Belongs to the UPF0316 family.

The protein resides in the cell membrane. The chain is UPF0316 protein SSP0880 from Staphylococcus saprophyticus subsp. saprophyticus (strain ATCC 15305 / DSM 20229 / NCIMB 8711 / NCTC 7292 / S-41).